A 646-amino-acid polypeptide reads, in one-letter code: Type III restriction-modification enzyme EcoPI Mod subunit (646 aa).

Residues 123 to 126 (DPPY) are binding of S-adenosyl methionine.

Belongs to the N(4)/N(6)-methyltransferase family. Homodimer. A heterotetramer with stoichiometry Res(2)Mod(2).

It carries out the reaction a 2'-deoxyadenosine in DNA + S-adenosyl-L-methionine = an N(6)-methyl-2'-deoxyadenosine in DNA + S-adenosyl-L-homocysteine + H(+). A beta subtype methylase that binds the system-specific DNA recognition site 5'-AGACC-3' and methylates A-3 (of only 1 strand as the other does not have an A residue). DNA restriction requires both the Res and Mod subunits. This chain is Type III restriction-modification enzyme EcoPI Mod subunit, found in Enterobacteriaceae (Bacteriophage P1).